Here is an 86-residue protein sequence, read N- to C-terminus: Small ribosomal subunit protein uS17 (86 aa).

It belongs to the universal ribosomal protein uS17 family. Part of the 30S ribosomal subunit.

One of the primary rRNA binding proteins, it binds specifically to the 5'-end of 16S ribosomal RNA. In Roseiflexus castenholzii (strain DSM 13941 / HLO8), this protein is Small ribosomal subunit protein uS17.